Consider the following 190-residue polypeptide: dCTP deaminase, dUMP-forming (190 aa).

DCTP-binding positions include Lys-101 to Arg-106, Asp-119, Thr-127 to Glu-129, Gln-148, Tyr-162, and Gln-174. Glu-129 functions as the Proton donor/acceptor in the catalytic mechanism. The tract at residues Tyr-162–Thr-190 is disordered. A compositionally biased stretch (polar residues) spans Ser-166–Thr-190.

The protein belongs to the dCTP deaminase family. Homotrimer.

It catalyses the reaction dCTP + 2 H2O = dUMP + NH4(+) + diphosphate. Its pathway is pyrimidine metabolism; dUMP biosynthesis; dUMP from dCTP: step 1/1. Functionally, bifunctional enzyme that catalyzes both the deamination of dCTP to dUTP and the hydrolysis of dUTP to dUMP without releasing the toxic dUTP intermediate. This Mycobacterium leprae (strain Br4923) protein is dCTP deaminase, dUMP-forming.